A 283-amino-acid chain; its full sequence is Diaminopimelate epimerase (283 aa).

Residues N13, Q46, and N66 each contribute to the substrate site. C75 functions as the Proton donor in the catalytic mechanism. Residues 76 to 77 (GN), N166, N199, and 217 to 218 (ER) contribute to the substrate site. Residue C226 is the Proton acceptor of the active site. Position 227–228 (227–228 (GT)) interacts with substrate.

It belongs to the diaminopimelate epimerase family. Homodimer.

Its subcellular location is the cytoplasm. The catalysed reaction is (2S,6S)-2,6-diaminopimelate = meso-2,6-diaminopimelate. Its pathway is amino-acid biosynthesis; L-lysine biosynthesis via DAP pathway; DL-2,6-diaminopimelate from LL-2,6-diaminopimelate: step 1/1. Its function is as follows. Catalyzes the stereoinversion of LL-2,6-diaminopimelate (L,L-DAP) to meso-diaminopimelate (meso-DAP), a precursor of L-lysine and an essential component of the bacterial peptidoglycan. This chain is Diaminopimelate epimerase, found in Herminiimonas arsenicoxydans.